A 465-amino-acid polypeptide reads, in one-letter code: GTPase Der (465 aa).

EngA-type G domains lie at 3–166 and 184–358; these read FLVA…LNEY and IHFS…ACAN. GTP contacts are provided by residues 9–16, 56–60, 118–121, 190–197, 237–241, and 302–305; these read GRANVGKS, DTGGI, NKVD, GRPNVGKS, DTAGV, and NKWD. The 85-residue stretch at 359–443 folds into the KH-like domain; it reads KKITTADATR…PIVFEFKQSE (85 aa). Residues 446–465 are disordered; sequence FADRKNKRSKDEGSKSKKVK.

This sequence belongs to the TRAFAC class TrmE-Era-EngA-EngB-Septin-like GTPase superfamily. EngA (Der) GTPase family. In terms of assembly, associates with the 50S ribosomal subunit.

Its function is as follows. GTPase that plays an essential role in the late steps of ribosome biogenesis. This chain is GTPase Der, found in Francisella tularensis subsp. tularensis (strain WY96-3418).